The following is a 223-amino-acid chain: Small ribosomal subunit protein uS3 (223 aa).

Residues 38-106 form the KH type-2 domain; sequence IRKFLDEKLK…QVHINIVEIK (69 aa).

The protein belongs to the universal ribosomal protein uS3 family. In terms of assembly, part of the 30S ribosomal subunit. Forms a tight complex with proteins S10 and S14.

In terms of biological role, binds the lower part of the 30S subunit head. Binds mRNA in the 70S ribosome, positioning it for translation. The protein is Small ribosomal subunit protein uS3 of Lactobacillus delbrueckii subsp. bulgaricus (strain ATCC 11842 / DSM 20081 / BCRC 10696 / JCM 1002 / NBRC 13953 / NCIMB 11778 / NCTC 12712 / WDCM 00102 / Lb 14).